We begin with the raw amino-acid sequence, 250 residues long: 2,3-bisphosphoglycerate-dependent phosphoglycerate mutase (250 aa).

Residues 8 to 15 (RHGESQWN), 21 to 22 (TG), arginine 60, 87 to 90 (ERHY), lysine 98, 114 to 115 (RR), and 183 to 184 (GN) contribute to the substrate site. Catalysis depends on histidine 9, which acts as the Tele-phosphohistidine intermediate. The Proton donor/acceptor role is filled by glutamate 87.

It belongs to the phosphoglycerate mutase family. BPG-dependent PGAM subfamily. Homodimer.

The enzyme catalyses (2R)-2-phosphoglycerate = (2R)-3-phosphoglycerate. It functions in the pathway carbohydrate degradation; glycolysis; pyruvate from D-glyceraldehyde 3-phosphate: step 3/5. Catalyzes the interconversion of 2-phosphoglycerate and 3-phosphoglycerate. This chain is 2,3-bisphosphoglycerate-dependent phosphoglycerate mutase, found in Bordetella pertussis (strain Tohama I / ATCC BAA-589 / NCTC 13251).